Reading from the N-terminus, the 335-residue chain is Glucose-dependent insulinotropic receptor (335 aa).

Over 1–12 (MESSFSFGVILA) the chain is Extracellular. The chain crosses the membrane as a helical span at residues 13 to 33 (VLASLIIATNTLVAVAVLLLI). Residues 34 to 37 (HKND) lie on the Cytoplasmic side of the membrane. The helical transmembrane segment at 38 to 58 (GVSLCFTLNLAVADTLIGVAI) threads the bilayer. Residues 59 to 81 (SGLLTDQLSSPSRPTQKTLCSLR) are Extracellular-facing. A helical membrane pass occupies residues 82–102 (MAFVTSSAAASVLTVMLITFD). Over 103-125 (RYLAIKQPFRYLKIMSGFVAGAC) the chain is Cytoplasmic. A helical transmembrane segment spans residues 126-146 (IAGLWLVSYLIGFLPLGIPMF). Residues 147 to 164 (QQTAYKGQCSFFAVFHPH) are Extracellular-facing. A helical transmembrane segment spans residues 165-185 (FVLTLSCVGFFPAMLLFVFFY). Residues 186–226 (CDMLKIASMHSQQIRKMEHAGAMAGGYRSPRTPSDFKALRT) lie on the Cytoplasmic side of the membrane. The chain crosses the membrane as a helical span at residues 227–247 (VSVLIGSFALSWTPFLITGIV). The Extracellular portion of the chain corresponds to 248–262 (QVACQECHLYLVLER). The helical transmembrane segment at 263–283 (YLWLLGVGNSLLNPLIYAYWQ) threads the bilayer. Over 284–335 (KEVRLQLYHMALGVKKVLTSFLLFLSARNCGPERPRESSCHIVTISSSEFDG) the chain is Cytoplasmic.

The protein belongs to the G-protein coupled receptor 1 family. As to expression, predominantly expressed in the pancreas, especially in the islets.

Its subcellular location is the cell membrane. Functionally, receptor for the endogenous fatty-acid ethanolamide oleoylethanolamide (OEA) and lysophosphatidylcholine (LPC). Functions as a glucose-dependent insulinotropic receptor. The activity of this receptor is mediated by G proteins which activate adenylate cyclase. Seems to act through a G(s) mediated pathway. This Homo sapiens (Human) protein is Glucose-dependent insulinotropic receptor (GPR119).